We begin with the raw amino-acid sequence, 325 residues long: Undecaprenyl-phosphate 4-deoxy-4-formamido-L-arabinose transferase (325 aa).

2 helical membrane-spanning segments follow: residues 234-254 (LLSVIGSVIALMGFAFSLLLI) and 269-289 (VFMLFAVLFIFIGAQFVGMGL).

It belongs to the glycosyltransferase 2 family.

The protein resides in the cell inner membrane. The enzyme catalyses UDP-4-deoxy-4-formamido-beta-L-arabinose + di-trans,octa-cis-undecaprenyl phosphate = 4-deoxy-4-formamido-alpha-L-arabinopyranosyl di-trans,octa-cis-undecaprenyl phosphate + UDP. It participates in glycolipid biosynthesis; 4-amino-4-deoxy-alpha-L-arabinose undecaprenyl phosphate biosynthesis; 4-amino-4-deoxy-alpha-L-arabinose undecaprenyl phosphate from UDP-4-deoxy-4-formamido-beta-L-arabinose and undecaprenyl phosphate: step 1/2. It functions in the pathway bacterial outer membrane biogenesis; lipopolysaccharide biosynthesis. In terms of biological role, catalyzes the transfer of 4-deoxy-4-formamido-L-arabinose from UDP to undecaprenyl phosphate. The modified arabinose is attached to lipid A and is required for resistance to polymyxin and cationic antimicrobial peptides. The protein is Undecaprenyl-phosphate 4-deoxy-4-formamido-L-arabinose transferase of Erwinia tasmaniensis (strain DSM 17950 / CFBP 7177 / CIP 109463 / NCPPB 4357 / Et1/99).